Here is a 512-residue protein sequence, read N- to C-terminus: Protein maelstrom homolog (512 aa).

Residues 9 to 75 (AKGPFYFFMM…NPKEAGGYGE (67 aa)) constitute a DNA-binding region (HMG box). 3 disordered regions span residues 49–72 (APHE…EAGG), 360–421 (RMSK…GTRA), and 439–465 (QSAN…DPQS). Positions 360-370 (RMSKLTTTSDN) are enriched in polar residues. The segment covering 379-388 (RSTDRTDRDV) has biased composition (basic and acidic residues). Polar residues-rich tracts occupy residues 393–421 (IYSS…GTRA) and 439–449 (QSANRSPTKKN). Residues 451–464 (WSRENKLTEVRDPQ) are compositionally biased toward basic and acidic residues.

It belongs to the maelstrom family.

The protein localises to the cytoplasm. The protein resides in the nucleus. Plays a central role during gametogenesis by repressing transposable elements and preventing their mobilization, which is essential for the germline integrity. Probably acts via the piRNA metabolic process, which mediates the repression of transposable elements during meiosis by forming complexes composed of piRNAs and Piwi proteins and governs the repression of transposons. This is Protein maelstrom homolog (mael) from Culex quinquefasciatus (Southern house mosquito).